A 297-amino-acid polypeptide reads, in one-letter code: tRNA dimethylallyltransferase (297 aa).

ATP is bound at residue 10 to 17 (GITASGKS). 12 to 17 (TASGKS) lines the substrate pocket. Residues 36 to 39 (DSKQ) are interaction with substrate tRNA.

This sequence belongs to the IPP transferase family. In terms of assembly, monomer. The cofactor is Mg(2+).

It catalyses the reaction adenosine(37) in tRNA + dimethylallyl diphosphate = N(6)-dimethylallyladenosine(37) in tRNA + diphosphate. Functionally, catalyzes the transfer of a dimethylallyl group onto the adenine at position 37 in tRNAs that read codons beginning with uridine, leading to the formation of N6-(dimethylallyl)adenosine (i(6)A). In Wolbachia sp. subsp. Brugia malayi (strain TRS), this protein is tRNA dimethylallyltransferase.